Consider the following 374-residue polypeptide: DNA replication and repair protein RecF (374 aa).

Residue 34–41 participates in ATP binding; that stretch reads GNNGAGKT.

The protein belongs to the RecF family.

It is found in the cytoplasm. In terms of biological role, the RecF protein is involved in DNA metabolism; it is required for DNA replication and normal SOS inducibility. RecF binds preferentially to single-stranded, linear DNA. It also seems to bind ATP. In Rhizobium etli (strain CIAT 652), this protein is DNA replication and repair protein RecF.